Here is a 506-residue protein sequence, read N- to C-terminus: Gamma-aminobutyric acid receptor subunit epsilon (506 aa).

An N-terminal signal peptide occupies residues 1-22; it reads MLSKVLPVLLGILLILQSRVEG. Residues 23 to 66 form a disordered region; that stretch reads PQTESKNEASSRDVVYGPQPQPLENQLLSEETKSTETETGSRVG. Residues 23 to 280 are Extracellular-facing; sequence PQTESKNEAS…FNVSRRFGYV (258 aa). An N-linked (GlcNAc...) asparagine glycan is attached at Asn134. A disulfide bond links Cys195 and Cys209. The N-linked (GlcNAc...) asparagine glycan is linked to Asn252. A helical transmembrane segment spans residues 281 to 301; sequence AFQNYVPSSVTTMLSWVSFWI. At 302–307 the chain is on the cytoplasmic side; sequence KTESAP. Residues 308 to 327 form a helical membrane-spanning segment; the sequence is ARTSLGITSVLTMTTLGTFS. At 328–343 the chain is on the extracellular side; sequence RKNFPRVSYITALDFY. A helical transmembrane segment spans residues 344 to 364; it reads IAICFVFCFCALLEFAVLNFL. At 365-485 the chain is on the cytoplasmic side; it reads IYNQTKAHAS…HVYRLDNYSR (121 aa). Positions 413–438 are disordered; it reads EGSDGEERPSCSAQQPPSPGSPEGPR. A helical transmembrane segment spans residues 486–506; that stretch reads VVFPVTFFFFNVLYWLVCLNL.

This sequence belongs to the ligand-gated ion channel (TC 1.A.9) family. Gamma-aminobutyric acid receptor (TC 1.A.9.5) subfamily. GABRE sub-subfamily. In terms of assembly, heteropentamer, formed by a combination of alpha (GABRA1-6), beta (GABRB1-3), gamma (GABRG1-3), delta (GABRD), epsilon (GABRE), rho (GABRR1-3), pi (GABRP) and theta (GABRQ) chains, each subunit exhibiting distinct physiological and pharmacological properties. As to expression, expressed in many tissues. Highest levels of expression in adult heart and placenta.

The protein resides in the cell membrane. The protein localises to the postsynaptic cell membrane. The catalysed reaction is chloride(in) = chloride(out). Potentiated by pentobarbital, loreclezole, and lanthanum and inhibited by zinc and furosemide. Introduction of the epsilon subunit to the receptor complex resulted in diminished modulatory effects by etomidate, propofol, pregnanolone and flurazepam. Its function is as follows. Epsilon subunit of the heteropentameric ligand-gated chloride channel gated by gamma-aminobutyric acid (GABA), a major inhibitory neurotransmitter in the brain. GABA-gated chloride channels, also named GABA(A) receptors (GABAAR), consist of five subunits arranged around a central pore and contain GABA active binding site(s) located at the alpha and beta subunit interfaces. When activated by GABA, GABAARs selectively allow the flow of chloride anions across the cell membrane down their electrochemical gradient. GABAARs containing epsilon subunits also permit spontaneous chloride channel activity while preserving the structural information required for GABA-gated openings. GABARs containing epsilon subunit may regulate cardiac function. This Homo sapiens (Human) protein is Gamma-aminobutyric acid receptor subunit epsilon.